Reading from the N-terminus, the 222-residue chain is Pro-opiomelanocortin-1 (222 aa).

The N-terminal stretch at 1-28 (MVRGERMLCPAWLLALAVLCAAGSEVRA) is a signal peptide. A propeptide spanning residues 29 to 105 (QCMEDARCRD…DPESSPQHEH (77 aa)) is cleaved from the precursor.

Belongs to the POMC family. In terms of processing, specific enzymatic cleavages at paired basic residues yield the different active peptides.

The protein resides in the secreted. In terms of biological role, stimulates the adrenal glands to release cortisol. Its function is as follows. Anorexigenic peptide. Increases the pigmentation of skin by increasing melanin production in melanocytes. Functionally, increases the pigmentation of skin by increasing melanin production in melanocytes. Endogenous orexigenic opiate. In terms of biological role, endogenous opiate. This is Pro-opiomelanocortin-1 (pomca) from Cyprinus carpio (Common carp).